The sequence spans 562 residues: Alpha-1D adrenergic receptor (562 aa).

Residues 1–90 (MTFRDILSVT…VGGLVVSAQG (90 aa)) lie on the Extracellular side of the membrane. Disordered stretches follow at residues 13-44 (GPRA…GVPG) and 50-69 (AVVG…EAGA). A compositionally biased stretch (gly residues) spans 21–44 (GGSGAGGGAGTVGPEGPAVGGVPG). Asparagine 60 and asparagine 76 each carry an N-linked (GlcNAc...) asparagine glycan. Residues 91-115 (VGVGVFLAAFILTAVAGNLLVILSV) form a helical membrane-spanning segment. Over 116-127 (ACNRHLQTVTNY) the chain is Cytoplasmic. The helical transmembrane segment at 128 to 153 (FIVNLAVADLLLSAAVLPFSATMEVL) threads the bilayer. The Extracellular segment spans residues 154 to 163 (GFWPFGRTFC). The helical transmembrane segment at 164 to 186 (DVWAAVDVLCCTASILSLCTISV) threads the bilayer. The Cytoplasmic portion of the chain corresponds to 187 to 207 (DRYVGVRHSLKYPAIMTERKA). The chain crosses the membrane as a helical span at residues 208–232 (AAILALLWAVALVVSVGPLLGWKEP). The Extracellular segment spans residues 233–245 (VPPDERFCGITEE). A helical membrane pass occupies residues 246–269 (VGYAIFSSVCSFYLPMAVIVVMYC). The Cytoplasmic segment spans residues 270–342 (RVYVVARSTT…KFSREKKAAK (73 aa)). Residues 343 to 367 (TLAIVVGVFVLCWFPFFFVLPLGSL) form a helical membrane-spanning segment. Over 368-374 (FPQLKPS) the chain is Extracellular. The chain crosses the membrane as a helical span at residues 375–399 (EGVFKVIFWLGYFNSCVNPLIYPCS). Over 400 to 562 (SREFKRAFLR…DLSNLRETDI (163 aa)) the chain is Cytoplasmic. A lipid anchor (S-palmitoyl cysteine) is attached at cysteine 413. The tract at residues 444 to 472 (QPAHRTPRGSPSPHCTPRPGLRRHAGGAG) is disordered.

It belongs to the G-protein coupled receptor 1 family. Adrenergic receptor subfamily. ADRA1D sub-subfamily. As to quaternary structure, interacts with FLNA (via filamin repeat 21); increases PKA-mediated phosphorylation of FLNA. Post-translationally, palmitoylated. Palmitoylation by ZDHHC21 may increase the expression of the receptor and regulate downstream signaling.

It localises to the cell membrane. This alpha-adrenergic receptor mediates its effect through the influx of extracellular calcium. The chain is Alpha-1D adrenergic receptor (Adra1d) from Mus musculus (Mouse).